The sequence spans 179 residues: Replication restart protein DnaT (179 aa).

The disordered stretch occupies residues 156-179 (GGLPKRDVNTVSEPDSQIPPGFRG).

The protein belongs to the DnaT family. As to quaternary structure, homooligomerizes. Interacts with PriB. Component of the replication restart primosome. Primosome assembly occurs via a 'hand-off' mechanism. PriA binds to replication forks, subsequently PriB then DnaT bind; DnaT then displaces ssDNA to generate the helicase loading substrate.

Its function is as follows. Involved in the restart of stalled replication forks, which reloads the replicative helicase on sites other than the origin of replication. Can function in multiple replication restart pathways. Displaces ssDNA from a PriB-ssDNA complex. Probably forms a spiral filament on ssDNA. The protein is Replication restart protein DnaT of Shigella boydii serotype 18 (strain CDC 3083-94 / BS512).